Reading from the N-terminus, the 469-residue chain is Aspartyl/glutamyl-tRNA(Asn/Gln) amidotransferase subunit B (469 aa).

It belongs to the GatB/GatE family. GatB subfamily. Heterotrimer of A, B and C subunits.

It catalyses the reaction L-glutamyl-tRNA(Gln) + L-glutamine + ATP + H2O = L-glutaminyl-tRNA(Gln) + L-glutamate + ADP + phosphate + H(+). It carries out the reaction L-aspartyl-tRNA(Asn) + L-glutamine + ATP + H2O = L-asparaginyl-tRNA(Asn) + L-glutamate + ADP + phosphate + 2 H(+). Its function is as follows. Allows the formation of correctly charged Asn-tRNA(Asn) or Gln-tRNA(Gln) through the transamidation of misacylated Asp-tRNA(Asn) or Glu-tRNA(Gln) in organisms which lack either or both of asparaginyl-tRNA or glutaminyl-tRNA synthetases. The reaction takes place in the presence of glutamine and ATP through an activated phospho-Asp-tRNA(Asn) or phospho-Glu-tRNA(Gln). The chain is Aspartyl/glutamyl-tRNA(Asn/Gln) amidotransferase subunit B from Methanococcus maripaludis (strain DSM 14266 / JCM 13030 / NBRC 101832 / S2 / LL).